Reading from the N-terminus, the 657-residue chain is MSASSSGGSPRFPSCGKNGVTSLTQKKVLRTPCGAPSVTVTKSHKRGMKGDTVNVRRSVRVKTKVPWMPPGKSSARHVGCNWENPPHCLEITPPSSEKLVSVMRLSDLSTEDDDSGHCKMNRYDKKIDSLMNAVGCLKSEVKMQKGERQMAKRFLEERKEELEEVAQELAETEHENTVLRHNIERIKEEKDYTMLQKKHLQQEKECLMSKLVEAEMDGAAAAKQVMALKDTIGKLKSEKQMTCSDINTLTRQKELLLQKLSTFEETNRTLRDLLREQHCKEDSERLMEQQGTLLKRLAEADSEKARLLLLLQDKDKEVEELLQEIQCEKAQAKTASELSKSMETMRGHLQAQLRCKEAENSRLCMQIKNLERSGNQHKAEVEAIMEQLKELKQKGERDKESLKKAIRAQKERAEKSEEYAEQLHVQLADKDLYVAEALSTLESWRSRYNQVVKDKGDLELEIIVLNDRVTDLVNQQQTLEEKMREDRDSLVERLHRQTAEYSAFKLENERLKASFAPMEDKLNQAHIEVQQLKASVKNYEGMIDNYKSQVMKTRLEADEVAAQLERCDKENKILKDEMNKEIEAARRQFQSQLADLQQLPDILKITEAKLAECQDQLQGYERKNIDLTAIISDLRSRVRDWQKGSHELARAGARLPR.

Phosphoserine occurs at positions 73 and 74. A Phosphothreonine modification is found at threonine 92. The residue at position 95 (serine 95) is a Phosphoserine; by TSSK4. A phosphoserine mark is found at serine 106 and serine 109. Threonine 110 bears the Phosphothreonine mark. 2 positions are modified to phosphoserine: serine 115 and serine 129. Residue lysine 138 forms a Glycyl lysine isopeptide (Lys-Gly) (interchain with G-Cter in SUMO2) linkage. Phosphoserine is present on serine 139. 2 coiled-coil regions span residues 144-423 and 461-635; these read QKGE…AEQL and EIIV…SDLR. Threonine 231 is modified (phosphothreonine). Residues serine 261 and serine 632 each carry the phosphoserine modification.

The protein belongs to the ODF2 family. As to quaternary structure, self-associates. Associates with microtubules and forms a fibrillar structure partially linked to the microtubule network. Interacts via its C-terminus with PLK1. Interacts with ODF1. Interacts with MARK4; the interaction is required for localization of ODF2 to centrioles. Interacts with TSSK4. Interacts with AKNA. Interacts with CFAP58. Interacts with BBOF1. Interacts with CCDC38. Interacts with CCDC42. Tyrosine phosphorylated. Phosphorylated on Ser-95 by TSSK4.

The protein localises to the cytoplasm. The protein resides in the cytoskeleton. It localises to the microtubule organizing center. It is found in the centrosome. Its subcellular location is the cell projection. The protein localises to the cilium. The protein resides in the centriole. It localises to the spindle pole. It is found in the flagellum. Its function is as follows. Seems to be a major component of sperm tail outer dense fibers (ODF). ODFs are filamentous structures located on the outside of the axoneme in the midpiece and principal piece of the mammalian sperm tail and may help to maintain the passive elastic structures and elastic recoil of the sperm tail. May have a modulating influence on sperm motility. Functions as a general scaffold protein that is specifically localized at the distal/subdistal appendages of mother centrioles. Component of the centrosome matrix required for the localization of PLK1 and NIN to the centrosomes. Required for the formation and/or maintenance of normal CETN1 assembly. The protein is Outer dense fiber protein 2 (ODF2) of Bos taurus (Bovine).